Consider the following 212-residue polypeptide: F420-dependent NADP reductase (212 aa).

Residues 9-12, 31-32, lysine 36, isoleucine 72, histidine 76, valine 98, and alanine 137 contribute to the NADP(+) site; these read TGNL and SR. Leucine 207 contacts coenzyme F420-(gamma-Glu)n.

The protein belongs to the F420-dependent NADP reductase family. In terms of assembly, homodimer.

It carries out the reaction reduced coenzyme F420-(gamma-L-Glu)(n) + NADP(+) = oxidized coenzyme F420-(gamma-L-Glu)(n) + NADPH + 2 H(+). Its function is as follows. Catalyzes the reversible reduction of NADP(+) by F420H(2). In this reaction the proS hydrogen at C5 of F420 is transferred into the proS position at C4 of NADPH. In Archaeoglobus fulgidus (strain ATCC 49558 / DSM 4304 / JCM 9628 / NBRC 100126 / VC-16), this protein is F420-dependent NADP reductase (fno).